We begin with the raw amino-acid sequence, 473 residues long: Aspartyl aminopeptidase 1 (473 aa).

Histidine 93 is a binding site for Zn(2+). Histidine 168 contacts substrate. Aspartate 262, glutamate 298, glutamate 299, and aspartate 343 together coordinate Zn(2+). Position 298 (glutamate 298) interacts with substrate. The substrate site is built by aspartate 343, histidine 346, lysine 371, and tyrosine 378. Zn(2+) is bound at residue histidine 437.

The protein belongs to the peptidase M18 family. As to quaternary structure, tetrahedron-shaped homododecamer built from six homodimers. Interacts with autophagy receptor Nbr1. The cofactor is Zn(2+).

Its subcellular location is the cytoplasm. It localises to the vacuole lumen. The catalysed reaction is Release of an N-terminal aspartate or glutamate from a peptide, with a preference for aspartate.. In terms of biological role, aspartyl aminopeptidase that is able to remove aspartyl residue at N-terminus of angiotensin I. Also acts as a chaperone and efficiently suppressed the thermal aggregation of citrate synthase. The polypeptide is Aspartyl aminopeptidase 1 (ape4) (Schizosaccharomyces pombe (strain 972 / ATCC 24843) (Fission yeast)).